The following is a 256-amino-acid chain: UstYa family oxidase phomYc (256 aa).

Residues 38 to 58 form a helical membrane-spanning segment; that stretch reads LVLVLQFVLIISLLASLHILG. Asn-64 and Asn-132 each carry an N-linked (GlcNAc...) asparagine glycan. An HXXHC 1 motif is present at residues 158–162; it reads HQLHC. Asn-179 carries an N-linked (GlcNAc...) asparagine glycan. The short motif at 193–197 is the HXXHC 2 element; sequence HIDHC.

Belongs to the ustYa family.

It localises to the membrane. It participates in mycotoxin biosynthesis. In terms of biological role, ustYa family oxidase; part of the gene cluster that mediates the biosynthesis of the phomopsins, a group of hexapeptide mycotoxins which infects lupins and causes lupinosis disease in livestock. Within the pathway, phomYc catalyzes the desaturation of the Ile moiety into 2,3-dehydroisoleucine (dIle). The pathway starts with the processing of the precursor phomA by several endopeptidases including kexin proteases as well as the cluster-specific S41 family peptidase phomP1 and the oligopeptidase phomG to produce 10 identical copies of the hexapeptide Tyr-Val-Ile-Pro-Ile-Asp. After being excised from the precursor peptide, the core peptides are cyclized and modified post-translationally by enzymes encoded within the gene cluster. The timing and order of proteolysis of the phomA precursor and PTMs are still unknown. Two tyrosinase-like enzymes, phomQ1 and phomQ2, catalyze the chlorination and hydroxylation of Tyr, respectively. PhomYb, is proposed to be involved in the construction of the macrocyclic structure. The other 4 ustYa family proteins may be involved in PTMs that generate the unique structure of phomopsin A. PhomYa is required for the hydroxylation of C-beta of Tyr. PhomYc, phomYd, and phomYe are responsible for the biosynthesis of 2,3-dehydroisoleucine (dIle), 2,3-dehydroaspartic acid (dAsp), and 3,4-dehydroproline (dPro), respectively. While dIle formation by phomYc is indispensable for the installation of dAsp by phomYd, the order of the other PTMs have not been elucidated yet. Most of the biosynthetic enzymes likely have broad substrate specificity, and thus, there might be a metabolic grid from a precursor to phomopsin A. The enzyme(s) responsible for the biosynthesis of 3,4-dehydrovaline (dVal) have also not been identified yet. Finally, phomM acts as an S-adenosylmethionine-dependent alpha-N-methyltransferase that catalyzes two successive N-methylation reactions, converting N-desmethyl-phomopsin A to phomopsin A and phomopsin A further to an N,N-dimethylated congener called phomopsin E. This is UstYa family oxidase phomYc from Diaporthe leptostromiformis (Lupinosis disease fungus).